The chain runs to 407 residues: Serpin-Z2 (407 aa).

Residues 1 to 28 (MDSKRKNQELSTSETADPSLSKTNKKQK) are disordered. A compositionally biased stretch (polar residues) spans 9–22 (ELSTSETADPSLSK). The RCL stretch occupies residues 344-368 (GTEAAAATTVVVVTGSCLWEPKKKI).

The protein belongs to the serpin family.

Functionally, probable serine protease inhibitor. This chain is Serpin-Z2, found in Arabidopsis thaliana (Mouse-ear cress).